We begin with the raw amino-acid sequence, 392 residues long: Chalcone synthase 1 (392 aa).

Cys167 is an active-site residue.

The protein belongs to the thiolase-like superfamily. Chalcone/stilbene synthases family.

The enzyme catalyses (E)-4-coumaroyl-CoA + 3 malonyl-CoA + 3 H(+) = 2',4,4',6'-tetrahydroxychalcone + 3 CO2 + 4 CoA. It functions in the pathway secondary metabolite biosynthesis; flavonoid biosynthesis. In terms of biological role, the primary product of this enzyme is 4,2',4',6'-tetrahydroxychalcone (also termed naringenin-chalcone or chalcone) which can under specific conditions spontaneously isomerize into naringenin. This chain is Chalcone synthase 1 (CHS1), found in Secale cereale (Rye).